The sequence spans 100 residues: Esterase PE11 (100 aa).

The PE domain maps to 4-94 (VTTRPDSIGE…TSYWLTELAN (91 aa)).

Belongs to the mycobacterial PE family.

Its subcellular location is the secreted. The protein localises to the cell wall. The catalysed reaction is an acetyl ester + H2O = an aliphatic alcohol + acetate + H(+). The enzyme catalyses a butanoate ester + H2O = an aliphatic alcohol + butanoate + H(+). It catalyses the reaction an octanoate ester + H2O = an aliphatic alcohol + octanoate + H(+). Its function is as follows. Involved in cell wall lipids remodeling and in virulence. Restricts the biofilm growth and is essential for the optimal intracellular survival of M.tuberculosis. Shows esterase activity with a preference for short-chain esters, particularly pNP-acetate (C2) and pNP-butyrate (C4). Has weaker activity with pNP-octanoate (C8), pNP-laurate (C12) and pNP-myristate (C14). Shows weak long-chain triacylglycerol (TAG) hydrolase activity in vitro. Not necessary for PPE17 stability or for its localization on the mycobacterial surface. In Mycobacterium tuberculosis (strain ATCC 25618 / H37Rv), this protein is Esterase PE11.